A 156-amino-acid chain; its full sequence is Succinate dehydrogenase [ubiquinone] cytochrome b small subunit 1, mitochondrial (156 aa).

The N-terminal 25 residues, 1–25 (MLSAVRRAIPLSARILRTSLIQRCA), are a transit peptide targeting the mitochondrion. Residues 26–59 (GATSAAVTGAAPPQFDPIAAEKGFKPLHSHGTLF) lie on the Mitochondrial matrix side of the membrane. The helical transmembrane segment at 60–78 (KIERYFAAAMVPLIPAAYF) threads the bilayer. The Mitochondrial intermembrane segment spans residues 79–83 (IHGRE). A helical transmembrane segment spans residues 84 to 104 (MDLCLALALTLHVHWGVWGVV). Position 95 (His-95) interacts with heme b. At 105 to 119 (NDYGRPFVLGDTLAA) the chain is on the mitochondrial matrix side. Tyr-107 lines the a rhodoquinol pocket. Residues 120 to 141 (AVRVGAYIFTACLLAGLLYFNE) form a helical membrane-spanning segment. The Mitochondrial intermembrane segment spans residues 142-156 (HDVGLTRAFEMVWEL).

Belongs to the CybS family. Component of the mitochondrial electron transport chain complex II composed of four subunits: a flavoprotein (Fp), an iron-sulfur protein (Ip), and a large cytochrome b (CybL) subunit and a small cytochrome b (CybS) subunit. There are 2 developmental stage-specific forms of complex II which have the Ip and CybL subunits in common. Complex II from the free-living larvae (aerobic environment) acts as a succinate dehydrogenase and is composed of the common subunit Ip and CybL and the stage specific subunits FpL and CybSL. Complex II from parasitic larvae and adults (anaerobic environment) acts as a fumarate reductase and is composed of the common subunit Ip and CybL and the stage specific subunits FpA and CybSA. Heme b is required as a cofactor. As to expression, expressed in adult muscles (at protein level).

Its subcellular location is the mitochondrion inner membrane. Membrane-bound small subunit (CybS) of the mitochondrial electron transport chain complex II, which together with the membrane-bound large subunit (CybL), anchor the catalytic subunits to the inner mitochondria membrane. During the parasitic larvae and adult stages, which occur in an anaerobic environment, complex II acts as a fumarate reductase by transferring electrons from rhodoquinol to fumarate. This is Succinate dehydrogenase [ubiquinone] cytochrome b small subunit 1, mitochondrial from Ascaris suum (Pig roundworm).